The chain runs to 126 residues: Fluoride-specific ion channel FluC (126 aa).

Helical transmembrane passes span 4–24 (SILA…FLGI), 35–55 (LGTF…VAGF), 68–88 (FVIT…AEVV), and 103–123 (IVIH…TVSL). 2 residues coordinate Na(+): Gly75 and Ser78.

This sequence belongs to the fluoride channel Fluc/FEX (TC 1.A.43) family.

The protein resides in the cell inner membrane. The catalysed reaction is fluoride(in) = fluoride(out). Its activity is regulated as follows. Na(+) is not transported, but it plays an essential structural role and its presence is essential for fluoride channel function. Its function is as follows. Fluoride-specific ion channel. Important for reducing fluoride concentration in the cell, thus reducing its toxicity. This Paraburkholderia xenovorans (strain LB400) protein is Fluoride-specific ion channel FluC.